A 146-amino-acid polypeptide reads, in one-letter code: Hemoglobin subunit beta (146 aa).

Val1 carries the N-acetylvaline modification. Residues 2 to 146 (HLTADEKAAV…VATALAHKYH (145 aa)) enclose the Globin domain. Residue Thr12 is modified to Phosphothreonine. Ser44 is modified (phosphoserine). Lys59 carries the post-translational modification N6-acetyllysine. His63 lines the heme b pocket. An N6-acetyllysine modification is found at Lys82. His92 provides a ligand contact to heme b. Cys93 bears the S-nitrosocysteine mark. An N6-acetyllysine modification is found at Lys144.

It belongs to the globin family. In terms of assembly, heterotetramer of two alpha chains and two beta chains. Red blood cells.

Its function is as follows. Involved in oxygen transport from the lung to the various peripheral tissues. This chain is Hemoglobin subunit beta (HBB), found in Taphozous georgianus (Sharp-nosed tomb bat).